The primary structure comprises 104 residues: Urease subunit gamma (104 aa).

The protein belongs to the urease gamma subunit family. As to quaternary structure, heterotrimer of UreA (gamma), UreB (beta) and UreC (alpha) subunits. Three heterotrimers associate to form the active enzyme.

The protein resides in the cytoplasm. The catalysed reaction is urea + 2 H2O + H(+) = hydrogencarbonate + 2 NH4(+). It functions in the pathway nitrogen metabolism; urea degradation; CO(2) and NH(3) from urea (urease route): step 1/1. In Actinomyces naeslundii, this protein is Urease subunit gamma.